We begin with the raw amino-acid sequence, 167 residues long: Small ribosomal subunit protein uS5 (167 aa).

One can recognise an S5 DRBM domain in the interval 12–75 (LEERVVTINR…EDAKKNMVFV (64 aa)).

This sequence belongs to the universal ribosomal protein uS5 family. Part of the 30S ribosomal subunit. Contacts proteins S4 and S8.

Its function is as follows. With S4 and S12 plays an important role in translational accuracy. Functionally, located at the back of the 30S subunit body where it stabilizes the conformation of the head with respect to the body. The chain is Small ribosomal subunit protein uS5 from Listeria innocua serovar 6a (strain ATCC BAA-680 / CLIP 11262).